We begin with the raw amino-acid sequence, 454 residues long: DNA-binding protein (454 aa).

The segment at 1 to 41 is disordered; the sequence is MSHKKVVAISESSSDEEVPVAPPTAPPKKRQRKAVEEPRGH. Phosphotyrosine; by host is present on Tyr129. Residues Cys213 and His215 each coordinate Zn(2+). The interval 226-260 is flexible loop; that stretch reads VEMDVNSENAQRALKENPEKTKIVSNRWGRNVVQF. The Zn(2+) site is built by Cys268, Cys284, Cys325, Cys327, Cys378, and Cys394. The interval 440–454 is C-terminal arm, DBP binding; it reads TILPQGQHDDDLVLF.

Belongs to the adenoviridae E2A DNA-binding protein family. As to quaternary structure, homomultimerizes on viral ssDNA bound to pTP. Forms a initiation complex with viral polymerase, pTP and hosts NFIA and POU2F1/OCT1. Interacts with host SRCAP.

The protein localises to the host nucleus. Its function is as follows. Plays a role in the elongation phase of viral strand displacement replication by unwinding the template in an ATP-independent fashion, employing its capacity to form multimers. Also enhances the rate of initiation. Released from template upon second strand synthesis. Assembles in complex with viral pTP, viral pol, host NFIA and host POU2F1/OCT1 on viral origin of replication. Covers the whole ssDNA genome during synthesis. The complementary strand synthesis induces its relese from DNA template. May inhibit cellular transcription mediated by the interaction between host SRCAP and CBP. The sequence is that of DNA-binding protein from Canine adenovirus serotype 1 (strain RI261) (CAdV-1).